The chain runs to 504 residues: MTTYSETLETAAQQFDQAVKSQPSQLTVTEIGTVEEVQRGIARVHGLPHVQVDEVLRFAGGHLGYAFNLDPDQVGCVLLDSSDQITAGSRVERMHSVLDTPVGDQLLGRVVDPVGRPLDGGRSLDDLPREPCERDAPPIMQRAPVTVPLQSGLKVVDAMIPIGRGQRQLLLGDRQTGKTAIAIDTIINQLGRDVICIYCSIGQRSTGVARVIENLRRHDALDHTIVVIGADDAPPGLQFLAPYAATTMGEHFMRQGRDVMIVYDDLTSHARAYRHLSLLLRRPPGREAFPGDIFYVHSRLLERSTHLIQSAGGGSLTALPIIETEAQNVSAYIPTNLISITDGQIYLSPTLFRKGVLPAIDVGRSVSRVGGKTQLPAYRVVAGDLRLTYSQFEELERFARFSSQLDEDTRATLDRGRLIREILKQTQFQPLTLPQQIASLIAVTNGVLDGVPVDQLPTIERAIQDAVTSQANDLCAQMQSGKKLDKQQVGQIANIAAGAVHAHA.

172-179 (GDRQTGKT) is an ATP binding site.

The protein belongs to the ATPase alpha/beta chains family. F-type ATPases have 2 components, CF(1) - the catalytic core - and CF(0) - the membrane proton channel. CF(1) has five subunits: alpha(3), beta(3), gamma(1), delta(1), epsilon(1). CF(0) has three main subunits: a(1), b(2) and c(9-12). The alpha and beta chains form an alternating ring which encloses part of the gamma chain. CF(1) is attached to CF(0) by a central stalk formed by the gamma and epsilon chains, while a peripheral stalk is formed by the delta and b chains.

It localises to the cell inner membrane. It catalyses the reaction ATP + H2O + 4 H(+)(in) = ADP + phosphate + 5 H(+)(out). In terms of biological role, produces ATP from ADP in the presence of a proton gradient across the membrane. The alpha chain is a regulatory subunit. The chain is ATP synthase subunit alpha 1 from Rhodopirellula baltica (strain DSM 10527 / NCIMB 13988 / SH1).